A 573-amino-acid chain; its full sequence is Squalene monooxygenase (573 aa).

The Cytoplasmic segment spans residues 1 to 19 (MWTFLGIATFTYFYKKCGD). The tract at residues 1–99 (MWTFLGIATF…EQLESKRRRK (99 aa)) is interaction with MARCHF6. The stretch at 20 to 40 (VTLANKELLLCVLVFLSLGLV) is an intramembrane region. Topologically, residues 41-573 (LSYRCRHRNG…IYSEMKYLVH (533 aa)) are cytoplasmic. The tract at residues 61-72 (QFAAFSDILSAL) is required for degradation in response to high membrane cholesterol levels. Residues 100-573 (EVNLSETTLT…IYSEMKYLVH (474 aa)) are sufficient for catalytic activity. FAD is bound by residues 132–133 (VL), 152–153 (ER), arginine 160, arginine 233, valine 249, aspartate 407, and methionine 420. The hydrophobic; mediates interaction with membranes stretch occupies residues 515–573 (PLLLIRHFFSVAVYATYFCFKSEPWATKPRALFSSGAILYKACSIIFPLIYSEMKYLVH).

This sequence belongs to the squalene monooxygenase family. Interacts (via N-terminal domain) with MARCHF6. Interacts with SMIM22; this interaction modulates lipid droplet formation. It depends on FAD as a cofactor. Post-translationally, ubiquitinated by MARCHF6 in response to high cholesterol levels in intracellular membranes, leading to proteasomal degradation. Detected in lever (at protein level).

The protein localises to the microsome membrane. It is found in the endoplasmic reticulum membrane. It catalyses the reaction squalene + reduced [NADPH--hemoprotein reductase] + O2 = (S)-2,3-epoxysqualene + oxidized [NADPH--hemoprotein reductase] + H2O + H(+). It participates in terpene metabolism; lanosterol biosynthesis; lanosterol from farnesyl diphosphate: step 2/3. Inhibited by NB-598 ((E)N-ethyl-N-(6,6-dimethyl-2-hepten-4-ynyl)-3-[(3,3'-bi-thiophen-5-yl)methoxy]benzene-methanamine). Contrary to fungal enzymes, the mammalian enzyme is only slightly inhibited by terbinafine. Its function is as follows. Catalyzes the stereospecific oxidation of squalene to (S)-2,3-epoxysqualene, and is considered to be a rate-limiting enzyme in steroid biosynthesis. The polypeptide is Squalene monooxygenase (Sqle) (Rattus norvegicus (Rat)).